The sequence spans 201 residues: Adenylyl-sulfate kinase (201 aa).

G35–S42 provides a ligand contact to ATP. S109 (phosphoserine intermediate) is an active-site residue.

The protein belongs to the APS kinase family.

The enzyme catalyses adenosine 5'-phosphosulfate + ATP = 3'-phosphoadenylyl sulfate + ADP + H(+). It functions in the pathway sulfur metabolism; hydrogen sulfide biosynthesis; sulfite from sulfate: step 2/3. Catalyzes the synthesis of activated sulfate. This chain is Adenylyl-sulfate kinase, found in Salmonella paratyphi A (strain AKU_12601).